Reading from the N-terminus, the 296-residue chain is MSAEVSTNESAPPAEKKSKLTNAQKARIERNQAKAQKLREAKLVSHPFKELASNKEGGTHPEAALSQGSSVIKVQGTKYIDSGGGFLLEQPVMPTGVGPAGLNKSGEEAPPILDDAIAIPVQYEECLECGDMFADSYLFNNFGHSVCDKCRDKDERYALITRTEAKAEYLLKDCDFDKREPKLRYISRKNPHNVRWGEMKLYLHLQIHQRALEVWGSEEELVRQHEAREDKREEGKARKYNKKMKQLRMEVRSSIYTKKTHEVHEHEFGPDTYDEEEDTYTHTCITCPYSETYEKM.

The span at 1–10 shows a compositional bias: polar residues; sequence MSAEVSTNES. A disordered region spans residues 1 to 39; that stretch reads MSAEVSTNESAPPAEKKSKLTNAQKARIERNQAKAQKLR. Over residues 26–39 the composition is skewed to basic and acidic residues; sequence ARIERNQAKAQKLR. The short motif at 26-47 is the Nuclear localization signal element; the sequence is ARIERNQAKAQKLREAKLVSHP. Positions 126, 129, 147, and 150 each coordinate Zn(2+). A zinc finger spans residues 126–150; that stretch reads CLECGDMFADSYLFNNFGHSVCDKC.

This sequence belongs to the XPA family. Strongly expressed in the central nervous system and muscles.

It is found in the nucleus. Its function is as follows. Involved in DNA excision repair. Initiates repair by binding to damaged sites with various affinities, depending on the photoproduct and the transcriptional state of the region. This chain is DNA repair protein complementing XP-A cells homolog (Xpac), found in Drosophila melanogaster (Fruit fly).